Reading from the N-terminus, the 763-residue chain is Phosphoglycerol transferase I (763 aa).

Helical transmembrane passes span 1–21 (MSEL…AWKA), 26–46 (WWFA…ITLY), 77–97 (ILPG…LGWV), and 108–128 (VGYS…SPAF).

The protein belongs to the OpgB family.

It is found in the cell inner membrane. The enzyme catalyses a phosphatidylglycerol + a membrane-derived-oligosaccharide D-glucose = a 1,2-diacyl-sn-glycerol + a membrane-derived-oligosaccharide 6-(glycerophospho)-D-glucose.. It participates in glycan metabolism; osmoregulated periplasmic glucan (OPG) biosynthesis. Its function is as follows. Transfers a phosphoglycerol residue from phosphatidylglycerol to the membrane-bound nascent glucan backbones. This chain is Phosphoglycerol transferase I, found in Salmonella heidelberg (strain SL476).